Consider the following 202-residue polypeptide: ATP synthase subunit b (202 aa).

Residues 9-29 (TTLSLCLAVCVVVIAVGTGWA) traverse the membrane as a helical segment.

Belongs to the ATPase B chain family. F-type ATPases have 2 components, F(1) - the catalytic core - and F(0) - the membrane proton channel. F(1) has five subunits: alpha(3), beta(3), gamma(1), delta(1), epsilon(1). F(0) has three main subunits: a(1), b(2) and c(10-14). The alpha and beta chains form an alternating ring which encloses part of the gamma chain. F(1) is attached to F(0) by a central stalk formed by the gamma and epsilon chains, while a peripheral stalk is formed by the delta and b chains.

The protein localises to the cell inner membrane. In terms of biological role, f(1)F(0) ATP synthase produces ATP from ADP in the presence of a proton or sodium gradient. F-type ATPases consist of two structural domains, F(1) containing the extramembraneous catalytic core and F(0) containing the membrane proton channel, linked together by a central stalk and a peripheral stalk. During catalysis, ATP synthesis in the catalytic domain of F(1) is coupled via a rotary mechanism of the central stalk subunits to proton translocation. Component of the F(0) channel, it forms part of the peripheral stalk, linking F(1) to F(0). The polypeptide is ATP synthase subunit b (Pelobacter propionicus (strain DSM 2379 / NBRC 103807 / OttBd1)).